Consider the following 316-residue polypeptide: 4-hydroxy-3-methylbut-2-enyl diphosphate reductase (316 aa).

Cysteine 18 contributes to the [4Fe-4S] cluster binding site. 2 residues coordinate (2E)-4-hydroxy-3-methylbut-2-enyl diphosphate: histidine 47 and histidine 80. Dimethylallyl diphosphate is bound by residues histidine 47 and histidine 80. Residues histidine 47 and histidine 80 each coordinate isopentenyl diphosphate. [4Fe-4S] cluster is bound at residue cysteine 102. Residue histidine 130 participates in (2E)-4-hydroxy-3-methylbut-2-enyl diphosphate binding. Histidine 130 lines the dimethylallyl diphosphate pocket. Histidine 130 serves as a coordination point for isopentenyl diphosphate. Glutamate 132 (proton donor) is an active-site residue. Residue threonine 171 participates in (2E)-4-hydroxy-3-methylbut-2-enyl diphosphate binding. A [4Fe-4S] cluster-binding site is contributed by cysteine 201. The (2E)-4-hydroxy-3-methylbut-2-enyl diphosphate site is built by serine 229, serine 230, asparagine 231, and serine 274. The dimethylallyl diphosphate site is built by serine 229, serine 230, asparagine 231, and serine 274. Isopentenyl diphosphate-binding residues include serine 229, serine 230, asparagine 231, and serine 274.

Belongs to the IspH family. [4Fe-4S] cluster is required as a cofactor.

The catalysed reaction is isopentenyl diphosphate + 2 oxidized [2Fe-2S]-[ferredoxin] + H2O = (2E)-4-hydroxy-3-methylbut-2-enyl diphosphate + 2 reduced [2Fe-2S]-[ferredoxin] + 2 H(+). It carries out the reaction dimethylallyl diphosphate + 2 oxidized [2Fe-2S]-[ferredoxin] + H2O = (2E)-4-hydroxy-3-methylbut-2-enyl diphosphate + 2 reduced [2Fe-2S]-[ferredoxin] + 2 H(+). It functions in the pathway isoprenoid biosynthesis; dimethylallyl diphosphate biosynthesis; dimethylallyl diphosphate from (2E)-4-hydroxy-3-methylbutenyl diphosphate: step 1/1. Its pathway is isoprenoid biosynthesis; isopentenyl diphosphate biosynthesis via DXP pathway; isopentenyl diphosphate from 1-deoxy-D-xylulose 5-phosphate: step 6/6. Its function is as follows. Catalyzes the conversion of 1-hydroxy-2-methyl-2-(E)-butenyl 4-diphosphate (HMBPP) into a mixture of isopentenyl diphosphate (IPP) and dimethylallyl diphosphate (DMAPP). Acts in the terminal step of the DOXP/MEP pathway for isoprenoid precursor biosynthesis. This Paracoccus denitrificans (strain Pd 1222) protein is 4-hydroxy-3-methylbut-2-enyl diphosphate reductase.